The chain runs to 196 residues: Chaperone protein TorD (196 aa).

The protein belongs to the TorD/DmsD family. TorD subfamily.

It is found in the cytoplasm. In terms of biological role, involved in the biogenesis of TorA. Acts on TorA before the insertion of the molybdenum cofactor and, as a result, probably favors a conformation of the apoenzyme that is competent for acquiring the cofactor. This chain is Chaperone protein TorD, found in Pasteurella multocida (strain Pm70).